Consider the following 428-residue polypeptide: Dihydroorotase (428 aa).

Residues His-59 and His-61 each contribute to the Zn(2+) site. Residues 61-63 (HFR) and Asn-93 contribute to the substrate site. 3 residues coordinate Zn(2+): Asp-151, His-178, and His-231. Asn-277 serves as a coordination point for substrate. Asp-304 serves as a coordination point for Zn(2+). Residue Asp-304 is part of the active site. Residues His-308 and 322–323 (FG) contribute to the substrate site.

This sequence belongs to the metallo-dependent hydrolases superfamily. DHOase family. Class I DHOase subfamily. As to quaternary structure, homodimer. Zn(2+) serves as cofactor.

The catalysed reaction is (S)-dihydroorotate + H2O = N-carbamoyl-L-aspartate + H(+). Its pathway is pyrimidine metabolism; UMP biosynthesis via de novo pathway; (S)-dihydroorotate from bicarbonate: step 3/3. Catalyzes the reversible cyclization of carbamoyl aspartate to dihydroorotate. The sequence is that of Dihydroorotase from Bacillus subtilis (strain 168).